The sequence spans 242 residues: Glutamate transport ATP-binding protein GluA (242 aa).

Residues 2–236 (IKMTGVQKFF…PQTDRAKDFL (235 aa)) form the ABC transporter domain. 34–41 (GPSGSGKS) serves as a coordination point for ATP.

This sequence belongs to the ABC transporter superfamily. As to quaternary structure, the complex is composed of two ATP-binding proteins (GluA), two transmembrane proteins (GluC and GluD) and a solute-binding protein (GluB).

The protein resides in the cell membrane. The catalysed reaction is a polar amino acid(out) + ATP + H2O = a polar amino acid(in) + ADP + phosphate + H(+). The enzyme catalyses L-glutamate(out) + ATP + H2O = L-glutamate(in) + ADP + phosphate + H(+). Part of the ABC transporter complex GluABCD involved in glutamate uptake. Probably responsible for energy coupling to the transport system. The sequence is that of Glutamate transport ATP-binding protein GluA from Corynebacterium efficiens (strain DSM 44549 / YS-314 / AJ 12310 / JCM 11189 / NBRC 100395).